A 132-amino-acid polypeptide reads, in one-letter code: ATP synthase epsilon chain (132 aa).

This sequence belongs to the ATPase epsilon chain family. In terms of assembly, F-type ATPases have 2 components, CF(1) - the catalytic core - and CF(0) - the membrane proton channel. CF(1) has five subunits: alpha(3), beta(3), gamma(1), delta(1), epsilon(1). CF(0) has three main subunits: a, b and c.

The protein resides in the cell membrane. Functionally, produces ATP from ADP in the presence of a proton gradient across the membrane. This Brevibacillus brevis (strain 47 / JCM 6285 / NBRC 100599) protein is ATP synthase epsilon chain.